Reading from the N-terminus, the 376-residue chain is Probable dual-specificity RNA methyltransferase RlmN (376 aa).

The active-site Proton acceptor is E96. One can recognise a Radical SAM core domain in the interval 102–346 (YPDRSTVCVS…CTVRVERGVE (245 aa)). The cysteines at positions 109 and 351 are disulfide-linked. [4Fe-4S] cluster-binding residues include C116, C120, and C123. Residues 171–172 (GE), S203, 226–228 (SLH), and N308 contribute to the S-adenosyl-L-methionine site. Catalysis depends on C351, which acts as the S-methylcysteine intermediate.

It belongs to the radical SAM superfamily. RlmN family. [4Fe-4S] cluster serves as cofactor.

The protein resides in the cytoplasm. The enzyme catalyses adenosine(2503) in 23S rRNA + 2 reduced [2Fe-2S]-[ferredoxin] + 2 S-adenosyl-L-methionine = 2-methyladenosine(2503) in 23S rRNA + 5'-deoxyadenosine + L-methionine + 2 oxidized [2Fe-2S]-[ferredoxin] + S-adenosyl-L-homocysteine. It carries out the reaction adenosine(37) in tRNA + 2 reduced [2Fe-2S]-[ferredoxin] + 2 S-adenosyl-L-methionine = 2-methyladenosine(37) in tRNA + 5'-deoxyadenosine + L-methionine + 2 oxidized [2Fe-2S]-[ferredoxin] + S-adenosyl-L-homocysteine. Its function is as follows. Specifically methylates position 2 of adenine 2503 in 23S rRNA and position 2 of adenine 37 in tRNAs. The sequence is that of Probable dual-specificity RNA methyltransferase RlmN from Chloroflexus aurantiacus (strain ATCC 29366 / DSM 635 / J-10-fl).